A 295-amino-acid chain; its full sequence is Nucleotide-binding protein BPUM_3115 (295 aa).

Position 16–23 (16–23 (GMSGAGKT)) interacts with ATP. A GTP-binding site is contributed by 67–70 (DLRG).

Belongs to the RapZ-like family.

Its function is as follows. Displays ATPase and GTPase activities. In Bacillus pumilus (strain SAFR-032), this protein is Nucleotide-binding protein BPUM_3115.